Consider the following 200-residue polypeptide: Holliday junction branch migration complex subunit RuvA (200 aa).

The tract at residues 1–64 (MIGRIVGTLI…EDSHTLYGFI (64 aa)) is domain I. The tract at residues 65–143 (DKNERALFRV…QAAKTDLFSA (79 aa)) is domain II. Residues 144 to 149 (PAVLRQ) form a flexible linker region. The segment at 150–200 (VQADPRQEAEAALISLGYKPQEAAKAIAGVPVDAANSEDVIKAALKGMLRK) is domain III.

The protein belongs to the RuvA family. In terms of assembly, homotetramer. Forms an RuvA(8)-RuvB(12)-Holliday junction (HJ) complex. HJ DNA is sandwiched between 2 RuvA tetramers; dsDNA enters through RuvA and exits via RuvB. An RuvB hexamer assembles on each DNA strand where it exits the tetramer. Each RuvB hexamer is contacted by two RuvA subunits (via domain III) on 2 adjacent RuvB subunits; this complex drives branch migration. In the full resolvosome a probable DNA-RuvA(4)-RuvB(12)-RuvC(2) complex forms which resolves the HJ.

It is found in the cytoplasm. In terms of biological role, the RuvA-RuvB-RuvC complex processes Holliday junction (HJ) DNA during genetic recombination and DNA repair, while the RuvA-RuvB complex plays an important role in the rescue of blocked DNA replication forks via replication fork reversal (RFR). RuvA specifically binds to HJ cruciform DNA, conferring on it an open structure. The RuvB hexamer acts as an ATP-dependent pump, pulling dsDNA into and through the RuvAB complex. HJ branch migration allows RuvC to scan DNA until it finds its consensus sequence, where it cleaves and resolves the cruciform DNA. The polypeptide is Holliday junction branch migration complex subunit RuvA (Marinomonas sp. (strain MWYL1)).